We begin with the raw amino-acid sequence, 281 residues long: Pantothenate synthetase (281 aa).

30–37 (MGNLHQGH) provides a ligand contact to ATP. The Proton donor role is filled by His37. Gln61 contacts (R)-pantoate. Beta-alanine is bound at residue Gln61. 149-152 (GNKD) contributes to the ATP binding site. Gln155 lines the (R)-pantoate pocket. Residues Ile178 and 186–189 (MSSR) contribute to the ATP site.

The protein belongs to the pantothenate synthetase family. In terms of assembly, homodimer.

Its subcellular location is the cytoplasm. It catalyses the reaction (R)-pantoate + beta-alanine + ATP = (R)-pantothenate + AMP + diphosphate + H(+). The protein operates within cofactor biosynthesis; (R)-pantothenate biosynthesis; (R)-pantothenate from (R)-pantoate and beta-alanine: step 1/1. In terms of biological role, catalyzes the condensation of pantoate with beta-alanine in an ATP-dependent reaction via a pantoyl-adenylate intermediate. The chain is Pantothenate synthetase from Shewanella baltica (strain OS155 / ATCC BAA-1091).